We begin with the raw amino-acid sequence, 219 residues long: Factor in the germline alpha (219 aa).

Residues glutamate 65–leucine 117 enclose the bHLH domain. Positions alanine 124 to glutamine 151 are disordered. A compositionally biased stretch (low complexity) spans serine 136–serine 148.

Heterodimer with TCF3/isoform E12. Germ cells. Expressed in the fetal ovary, but not by a range of other tissues. Expression increases across mid-gestation, rising some 40-fold by the time of primordial follicle formation.

The protein resides in the nucleus. Its function is as follows. Germline specific transcription factor implicated in postnatal oocyte-specific gene expression. Plays a key regulatory role in the expression of multiple oocyte-specific genes, including those that initiate folliculogenesis and those that encode the zona pellucida (ZP1, ZP2 and ZP3) required for fertilization and early embryonic survival. Essential for oocytes to survive and form primordial follicles. The persistence of FIGLA in adult females suggests that it may regulate additional pathways that are essential for normal ovarian development. Binds to the E-box (5'-CANNTG-3') of the ZPs (ZP1, ZP2, ZP3) promoters. This is Factor in the germline alpha (FIGLA) from Homo sapiens (Human).